Reading from the N-terminus, the 514-residue chain is Voltage-gated potassium channel regulatory subunit KCNG1 (514 aa).

Over 1–224 (MTLLPGDNSH…DMVERPHSGL (224 aa)) the chain is Cytoplasmic. The segment covering 180–196 (MEREEEEEPLDSEDQES) has biased composition (acidic residues). Residues 180-205 (MEREEEEEPLDSEDQESEGPSASEGR) are disordered. The chain crosses the membrane as a helical span at residues 225 to 246 (PGKVFACLSVLFVTVTAVNLSV). Topologically, residues 247–267 (STLPSLREEEEQGQCSQMCHN) are extracellular. The chain crosses the membrane as a helical span at residues 268-289 (VFIVESVCVGWFSLEFLLRFIQ). Over 290–300 (APSKFAFLRSP) the chain is Cytoplasmic. Residues 301–321 (LTLIDLVAILPYYVTLLVDGA) form a helical membrane-spanning segment. Residues 322 to 338 (ASSRRKPSTGNSYLDKV) are Extracellular-facing. A helical; Voltage-sensor membrane pass occupies residues 339–359 (GLVLRVLRALRILYVMRLARH). Over 360-374 (SLGLQTLGLTARRCT) the chain is Cytoplasmic. Residues 375–396 (REFGLLLLFLCVAIALFAPLLY) traverse the membrane as a helical segment. Topologically, residues 397–411 (VIENEMADSPEFTSI) are extracellular. Positions 412-423 (PACYWWAVITMT) form an intramembrane region, helical. The Selectivity filter motif lies at 424–429 (TVGYGD). The stretch at 424-431 (TVGYGDMV) is an intramembrane region. Over 432-438 (PRSTPGQ) the chain is Extracellular. A helical transmembrane segment spans residues 439–467 (VVALSSILSGILLMAFPVTSIFHTFSRSY). The Cytoplasmic segment spans residues 468-514 (LELKQEQERVLIRRAQYLIKTKSQLSGMSQDSDILFGSASSDTRDNN).

The protein belongs to the potassium channel family. G (TC 1.A.1.2) subfamily. Kv6.1/KCNG1 sub-subfamily. In terms of assembly, heterotetramer with KCNB1 or KCNB2.

It localises to the cell membrane. In terms of biological role, regulatory alpha-subunit of the voltage-gated potassium (Kv) channel which, when coassembled with KCNB1 or KCNB2, can modulate their expression and their gating kinetics by acting on deactivation upon repolarization and inactivation during maintained depolarization. Potassium channel subunit that does not form functional channels by itself. This chain is Voltage-gated potassium channel regulatory subunit KCNG1, found in Mus musculus (Mouse).